Consider the following 262-residue polypeptide: GTP cyclohydrolase 1 type 2 homolog (262 aa).

A divalent metal cation-binding residues include H65, D102, H222, and E225.

This sequence belongs to the GTP cyclohydrolase I type 2/NIF3 family. As to quaternary structure, homohexamer.

This is GTP cyclohydrolase 1 type 2 homolog from Streptococcus pyogenes serotype M3 (strain ATCC BAA-595 / MGAS315).